The primary structure comprises 233 residues: MKEDPYLEVKRHLAREAAALVTSGMLLGLGSGSTSREFIKAVAERKKQENLDIRAVASSKESYSLASSLGIPLIDDEEFINTDLAVDGADEIDPQLRMIKGGGGAIFREKILLQSSQRRLILADESKSVKVLGKFGLPVEISPFGRSSIIATLENFGYLGNLRKNPRGGFFITNNGNYIYDIHTPNVYPHPEEDLLKLLQIHGIIEAGFVIENVEVWLGYTNGQIGKKNTGGL.

Substrate-binding positions include 31–34 (SGST), 87–90 (DGAD), and 100–103 (KGGG). Glu-109 (proton acceptor) is an active-site residue. Residue Lys-127 participates in substrate binding.

It belongs to the ribose 5-phosphate isomerase family. Homodimer.

It carries out the reaction aldehydo-D-ribose 5-phosphate = D-ribulose 5-phosphate. The protein operates within carbohydrate degradation; pentose phosphate pathway; D-ribose 5-phosphate from D-ribulose 5-phosphate (non-oxidative stage): step 1/1. Its function is as follows. Catalyzes the reversible conversion of ribose-5-phosphate to ribulose 5-phosphate. In Chlamydia caviae (strain ATCC VR-813 / DSM 19441 / 03DC25 / GPIC) (Chlamydophila caviae), this protein is Ribose-5-phosphate isomerase A.